The primary structure comprises 155 residues: S-ribosylhomocysteine lyase (155 aa).

The Fe cation site is built by H58, H62, and C125.

This sequence belongs to the LuxS family. Homodimer. It depends on Fe cation as a cofactor.

The catalysed reaction is S-(5-deoxy-D-ribos-5-yl)-L-homocysteine = (S)-4,5-dihydroxypentane-2,3-dione + L-homocysteine. Involved in the synthesis of autoinducer 2 (AI-2) which is secreted by bacteria and is used to communicate both the cell density and the metabolic potential of the environment. The regulation of gene expression in response to changes in cell density is called quorum sensing. Catalyzes the transformation of S-ribosylhomocysteine (RHC) to homocysteine (HC) and 4,5-dihydroxy-2,3-pentadione (DPD). In Helicobacter pylori (strain HPAG1), this protein is S-ribosylhomocysteine lyase.